The following is a 594-amino-acid chain: Aspartate--tRNA(Asp/Asn) ligase (594 aa).

An L-aspartate-binding site is contributed by Glu-175. Positions Gln-199–Lys-202 are aspartate. Residue Arg-221 participates in L-aspartate binding. ATP is bound by residues Arg-221 to Glu-223 and Gln-230. His-450 is an L-aspartate binding site. Glu-485 is a binding site for ATP. Residue Arg-492 coordinates L-aspartate. An ATP-binding site is contributed by Gly-537–Arg-540.

This sequence belongs to the class-II aminoacyl-tRNA synthetase family. Type 1 subfamily. In terms of assembly, homodimer.

The protein resides in the cytoplasm. The catalysed reaction is tRNA(Asx) + L-aspartate + ATP = L-aspartyl-tRNA(Asx) + AMP + diphosphate. Its function is as follows. Aspartyl-tRNA synthetase with relaxed tRNA specificity since it is able to aspartylate not only its cognate tRNA(Asp) but also tRNA(Asn). Reaction proceeds in two steps: L-aspartate is first activated by ATP to form Asp-AMP and then transferred to the acceptor end of tRNA(Asp/Asn). The sequence is that of Aspartate--tRNA(Asp/Asn) ligase from Herpetosiphon aurantiacus (strain ATCC 23779 / DSM 785 / 114-95).